Here is a 210-residue protein sequence, read N- to C-terminus: Orotate phosphoribosyltransferase (210 aa).

5-phospho-alpha-D-ribose 1-diphosphate contacts are provided by residues Arg-94, Lys-98, His-100, and 120 to 128; that span reads EDLISTGGS. Ser-124 contributes to the orotate binding site.

This sequence belongs to the purine/pyrimidine phosphoribosyltransferase family. PyrE subfamily. As to quaternary structure, homodimer. Mg(2+) serves as cofactor.

The catalysed reaction is orotidine 5'-phosphate + diphosphate = orotate + 5-phospho-alpha-D-ribose 1-diphosphate. It participates in pyrimidine metabolism; UMP biosynthesis via de novo pathway; UMP from orotate: step 1/2. Functionally, catalyzes the transfer of a ribosyl phosphate group from 5-phosphoribose 1-diphosphate to orotate, leading to the formation of orotidine monophosphate (OMP). This Bacillus anthracis (strain A0248) protein is Orotate phosphoribosyltransferase.